The following is a 107-amino-acid chain: Phosphoribosyl-ATP pyrophosphatase (107 aa).

This sequence belongs to the PRA-PH family.

The protein resides in the cytoplasm. The catalysed reaction is 1-(5-phospho-beta-D-ribosyl)-ATP + H2O = 1-(5-phospho-beta-D-ribosyl)-5'-AMP + diphosphate + H(+). It functions in the pathway amino-acid biosynthesis; L-histidine biosynthesis; L-histidine from 5-phospho-alpha-D-ribose 1-diphosphate: step 2/9. The sequence is that of Phosphoribosyl-ATP pyrophosphatase (hisE) from Neisseria meningitidis serogroup A / serotype 4A (strain DSM 15465 / Z2491).